Reading from the N-terminus, the 274-residue chain is Nickel/cobalt efflux system RcnA (274 aa).

Residues 1-12 (MTEFTTLLQQGN) lie on the Periplasmic side of the membrane. A helical transmembrane segment spans residues 13–33 (AWFFIPSAILLGALHGLEPGH). Over 34–56 (SKTMMAAFIIAIKGTIKQAVMLG) the chain is Cytoplasmic. Residues 57 to 77 (LAATISHTAVVWLIAFGGMVI) form a helical membrane-spanning segment. Over 78 to 86 (SKRFTAQSA) the chain is Periplasmic. The helical transmembrane segment at 87–107 (EPWLQLISAVIIISTAFWMFW) threads the bilayer. The Cytoplasmic portion of the chain corresponds to 108–174 (RTWRGERNWL…FDGREVTNWQ (67 aa)). The span at 127-137 (HHHHDHEDHHD) shows a compositional bias: basic and acidic residues. The disordered stretch occupies residues 127–153 (HHHHDHEDHHDHGHHHHHEHGEYQDAH). The helical transmembrane segment at 175–195 (ILLFGLTGGLIPCPAAITVLL) threads the bilayer. At 196–209 (ICIQLKALTLGATL) the chain is on the periplasmic side. Residues 210–230 (VVSFSLGLALTLVTVSVGAAI) traverse the membrane as a helical segment. At 231–251 (SVQQVAKRWSGFNTLAKRAPY) the chain is on the cytoplasmic side. A helical membrane pass occupies residues 252–272 (FSSLLIGLVGVYMGVHGFMGI). The Periplasmic segment spans residues 273–274 (MR).

The protein belongs to the NiCoT transporter (TC 2.A.52) family. RcnA subfamily.

It localises to the cell inner membrane. Its function is as follows. Efflux system for nickel and cobalt. This chain is Nickel/cobalt efflux system RcnA (rcnA), found in Escherichia coli O6:K15:H31 (strain 536 / UPEC).